Reading from the N-terminus, the 47-residue chain is uncharacterized protein (47 aa).

This is an uncharacterized protein from Bacillus subtilis (strain 168).